A 620-amino-acid chain; its full sequence is Chaperone protein HscA homolog (620 aa).

It belongs to the heat shock protein 70 family.

Chaperone involved in the maturation of iron-sulfur cluster-containing proteins. Has a low intrinsic ATPase activity which is markedly stimulated by HscB. This Shewanella woodyi (strain ATCC 51908 / MS32) protein is Chaperone protein HscA homolog.